Reading from the N-terminus, the 742-residue chain is Photosystem I P700 chlorophyll a apoprotein A2 (742 aa).

8 consecutive transmembrane segments (helical) span residues 46–69 (LFST…FHVA), 135–158 (LFQA…LHLQ), 175–199 (LNHH…HVAI), 273–291 (IAHH…GHMY), 336–359 (LHFQ…QHMG), 375–401 (SALY…IFFV), 423–445 (ALIS…IYVH), and 525–543 (FLVH…LILI). Residues Cys-567 and Cys-576 each coordinate [4Fe-4S] cluster. 2 helical membrane-spanning segments follow: residues 583–604 (AMYL…YWHW) and 651–673 (LSPW…MFLI). Positions 662, 670, and 678 each coordinate divinyl chlorophyll a. Trp-679 provides a ligand contact to phylloquinone. Residues 715–735 (LVGLAHFTIGNILTFGAFVIA) form a helical membrane-spanning segment.

This sequence belongs to the PsaA/PsaB family. The PsaA/B heterodimer binds the P700 divinyl chlorophyll special pair and subsequent electron acceptors. PSI consists of a core antenna complex that captures photons, and an electron transfer chain that converts photonic excitation into a charge separation. The cyanobacterial PSI reaction center is composed of one copy each of PsaA,B,C,D,E,F,I,J,K,L,M and X, and forms trimeric complexes. PSI electron transfer chain: 5 divinyl chlorophyll a, 1 divinyl chlorophyll a', 2 phylloquinones and 3 4Fe-4S clusters. PSI core antenna: 90 divinyl chlorophyll a, 22 carotenoids, 3 phospholipids and 1 galactolipid. P700 is a divinyl chlorophyll a/divinyl chlorophyll a' dimer, A0 is one or more divinyl chlorophyll a, A1 is one or both phylloquinones and FX is a shared 4Fe-4S iron-sulfur center. serves as cofactor.

The protein resides in the cellular thylakoid membrane. The enzyme catalyses reduced [plastocyanin] + hnu + oxidized [2Fe-2S]-[ferredoxin] = oxidized [plastocyanin] + reduced [2Fe-2S]-[ferredoxin]. PsaA and PsaB bind P700, the primary electron donor of photosystem I (PSI), as well as the electron acceptors A0, A1 and FX. PSI is a plastocyanin/cytochrome c6-ferredoxin oxidoreductase, converting photonic excitation into a charge separation, which transfers an electron from the donor P700 chlorophyll pair to the spectroscopically characterized acceptors A0, A1, FX, FA and FB in turn. Oxidized P700 is reduced on the lumenal side of the thylakoid membrane by plastocyanin or cytochrome c6. This chain is Photosystem I P700 chlorophyll a apoprotein A2, found in Prochlorococcus marinus (strain MIT 9312).